The sequence spans 218 residues: Pyridoxine/pyridoxamine 5'-phosphate oxidase (218 aa).

Residues 14 to 17 (RREY) and lysine 72 each bind substrate. Residues 67-72 (RIVLLK), 82-83 (YT), arginine 88, lysine 89, and glutamine 111 contribute to the FMN site. 3 residues coordinate substrate: tyrosine 129, arginine 133, and serine 137. Residues 146–147 (QS) and tryptophan 191 each bind FMN. Position 197 to 199 (197 to 199 (RLH)) interacts with substrate. Residue arginine 201 coordinates FMN.

It belongs to the pyridoxamine 5'-phosphate oxidase family. Homodimer. It depends on FMN as a cofactor.

It carries out the reaction pyridoxamine 5'-phosphate + O2 + H2O = pyridoxal 5'-phosphate + H2O2 + NH4(+). The catalysed reaction is pyridoxine 5'-phosphate + O2 = pyridoxal 5'-phosphate + H2O2. The protein operates within cofactor metabolism; pyridoxal 5'-phosphate salvage; pyridoxal 5'-phosphate from pyridoxamine 5'-phosphate: step 1/1. Its pathway is cofactor metabolism; pyridoxal 5'-phosphate salvage; pyridoxal 5'-phosphate from pyridoxine 5'-phosphate: step 1/1. Its function is as follows. Catalyzes the oxidation of either pyridoxine 5'-phosphate (PNP) or pyridoxamine 5'-phosphate (PMP) into pyridoxal 5'-phosphate (PLP). The protein is Pyridoxine/pyridoxamine 5'-phosphate oxidase of Salmonella paratyphi B (strain ATCC BAA-1250 / SPB7).